A 250-amino-acid chain; its full sequence is ATP synthase subunit a (250 aa).

A run of 6 helical transmembrane segments spans residues Ser-31–Gly-51, Phe-85–Ile-105, Leu-115–Tyr-135, Leu-144–Ile-164, Phe-194–Gly-214, and Val-217–Leu-237.

The protein belongs to the ATPase A chain family. In terms of assembly, F-type ATPases have 2 components, CF(1) - the catalytic core - and CF(0) - the membrane proton channel. CF(1) has five subunits: alpha(3), beta(3), gamma(1), delta(1), epsilon(1). CF(0) has four main subunits: a, b, b' and c.

It localises to the cell inner membrane. Its function is as follows. Key component of the proton channel; it plays a direct role in the translocation of protons across the membrane. In Rhodopseudomonas palustris (strain BisB5), this protein is ATP synthase subunit a.